The chain runs to 453 residues: MQAIAKNDIKTGTVVDLTHEGHGVVKIDRFPIFIPQALINEQIEYKIIKVKKNFAIGKLLNINTRSENRVAPPCIYYERCGGCQLQHLSYEAQLEMKKEQVINLFQRKAHFDNSKINDTVGMTDPWRYRNKSQIPVGKNEQNEVIMGFYRQRSHDIIDMESCLIQDSQHQEVMNEVKSILKDLNVSIYQEQLKKGLMRHLVVRTGYHTDEMMIIFVTNGKKWPQKNAVVEKILDAFPNVTSIKQNINDSHSNVIMGRQSITLYGKDTIIDQLTDSTFKISDQSFYQINSEQTEKLYNKAIEYAQLTGNEVVLDTYCGIGTIGLYMAPLAKHVYGVEVVPSAIEDAQQNATINQCNNTTFVCGKAEEVILQWKAQGIKPDVVMVDPPRKGCDETFIQTLLTLEPKRIVYISCNPATQQRDALLLAEKYQLEEVTPVDMFPQTTHVETVALFNLK.

Residues Cys-74, Cys-80, Cys-83, and Cys-162 each contribute to the [4Fe-4S] cluster site. 4 residues coordinate S-adenosyl-L-methionine: Gln-286, Tyr-315, Glu-336, and Asp-384. Cys-411 (nucleophile) is an active-site residue.

It belongs to the class I-like SAM-binding methyltransferase superfamily. RNA M5U methyltransferase family.

This is an uncharacterized protein from Staphylococcus aureus (strain COL).